Reading from the N-terminus, the 20-residue chain is Unknown protein NF040 from 2D-PAGE (20 aa).

Residues 1–20 (MKVYTDIFTRDEFLSDSYPM) enclose the TCTP domain.

The protein belongs to the TCTP family.

The polypeptide is Unknown protein NF040 from 2D-PAGE (Naegleria fowleri (Brain eating amoeba)).